A 100-amino-acid chain; its full sequence is Cytochrome b (100 aa).

3 consecutive transmembrane segments (helical) span residues Met-1–Met-21, Trp-45–Ile-66, and Trp-81–Val-100. The heme b site is built by His-51 and His-65.

It belongs to the cytochrome b family. The cytochrome bc1 complex contains 3 respiratory subunits (MT-CYB, CYC1 and UQCRFS1), 2 core proteins (UQCRC1 and UQCRC2) and probably 6 low-molecular weight proteins. Requires heme b as cofactor.

The protein localises to the mitochondrion inner membrane. Functionally, component of the ubiquinol-cytochrome c reductase complex (complex III or cytochrome b-c1 complex) that is part of the mitochondrial respiratory chain. The b-c1 complex mediates electron transfer from ubiquinol to cytochrome c. Contributes to the generation of a proton gradient across the mitochondrial membrane that is then used for ATP synthesis. This Polypterus sp. (Bichir) protein is Cytochrome b (mt-cyb).